A 70-amino-acid chain; its full sequence is Beta-defensin 107A (70 aa).

Residues 1-26 (MPGAMKIFFFIFAALILLAQIFQART) form the signal peptide. 2 cysteine pairs are disulfide-bonded: cysteine 41–cysteine 55 and cysteine 45–cysteine 64.

It belongs to the beta-defensin family.

The protein localises to the secreted. Functionally, has antibacterial activity. This Pan troglodytes (Chimpanzee) protein is Beta-defensin 107A (DEFB107A).